The following is a 263-amino-acid chain: Thymidylate kinase (263 aa).

The transit peptide at 1–51 directs the protein to the mitochondrion; the sequence is MKRICSVSSVQLFSRSFRALASPRSLNYPLQCIKRSSVRMESSNFSSGVRT. 66 to 74 contacts ATP; that stretch reads GLDRSGKST.

The protein belongs to the thymidylate kinase family. As to expression, expressed in root, rosette leaves, flower buds, flowers and siliques.

The protein localises to the mitochondrion. The protein resides in the cytoplasm. It is found in the nucleus. Its subcellular location is the nucleoplasm. The enzyme catalyses dTMP + ATP = dTDP + ADP. Its pathway is pyrimidine metabolism; dTTP biosynthesis. Its function is as follows. Catalyzes the conversion of dTMP to dTDP. Involved in the regulation of DNA replication. Is essential to promote the first division of the zygote. The protein is Thymidylate kinase of Arabidopsis thaliana (Mouse-ear cress).